We begin with the raw amino-acid sequence, 963 residues long: Translation initiation factor IF-2 (963 aa).

Residues 53–77 show a composition bias toward basic and acidic residues; that stretch reads SHGQADDSARKKITLTKRETSEIRQ. A disordered region spans residues 53–377; sequence SHGQADDSAR…RSNFQAPTEP (325 aa). Positions 78-87 are enriched in polar residues; it reads SDATGKTRTV. 4 stretches are compositionally biased toward basic and acidic residues: residues 98–110, 123–183, 197–250, and 267–278; these read IKRDDAAPEHQAD, EEAR…KAEE, DTSR…EAEA, and PSERKAEEKKAE. Residues 343–356 show a composition bias toward gly residues; it reads SSGGVGGWRGGPRG. The region spanning 463 to 632 is the tr-type G domain; sequence PRPPVVTVMG…SLQAEVLELK (170 aa). The G1 stretch occupies residues 472-479; sequence GHVDHGKT. 472-479 is a binding site for GTP; it reads GHVDHGKT. Positions 497 to 501 are G2; that stretch reads GITQH. The interval 518–521 is G3; sequence DTPG. GTP-binding positions include 518 to 522 and 572 to 575; these read DTPGH and NKVD. The segment at 572-575 is G4; the sequence is NKVD. Positions 608 to 610 are G5; the sequence is SAK.

It belongs to the TRAFAC class translation factor GTPase superfamily. Classic translation factor GTPase family. IF-2 subfamily.

It localises to the cytoplasm. In terms of biological role, one of the essential components for the initiation of protein synthesis. Protects formylmethionyl-tRNA from spontaneous hydrolysis and promotes its binding to the 30S ribosomal subunits. Also involved in the hydrolysis of GTP during the formation of the 70S ribosomal complex. This Cupriavidus taiwanensis (strain DSM 17343 / BCRC 17206 / CCUG 44338 / CIP 107171 / LMG 19424 / R1) (Ralstonia taiwanensis (strain LMG 19424)) protein is Translation initiation factor IF-2.